A 425-amino-acid polypeptide reads, in one-letter code: Serine--tRNA ligase (425 aa).

233–235 serves as a coordination point for L-serine; it reads TAE. ATP is bound by residues 264 to 266 and Val280; that span reads RRE. Residue Glu287 participates in L-serine binding. Residue 351–354 participates in ATP binding; sequence EVSS. Ser387 contacts L-serine.

This sequence belongs to the class-II aminoacyl-tRNA synthetase family. Type-1 seryl-tRNA synthetase subfamily. Homodimer. The tRNA molecule binds across the dimer.

It localises to the cytoplasm. The enzyme catalyses tRNA(Ser) + L-serine + ATP = L-seryl-tRNA(Ser) + AMP + diphosphate + H(+). It catalyses the reaction tRNA(Sec) + L-serine + ATP = L-seryl-tRNA(Sec) + AMP + diphosphate + H(+). Its pathway is aminoacyl-tRNA biosynthesis; selenocysteinyl-tRNA(Sec) biosynthesis; L-seryl-tRNA(Sec) from L-serine and tRNA(Sec): step 1/1. Its function is as follows. Catalyzes the attachment of serine to tRNA(Ser). Is also able to aminoacylate tRNA(Sec) with serine, to form the misacylated tRNA L-seryl-tRNA(Sec), which will be further converted into selenocysteinyl-tRNA(Sec). The chain is Serine--tRNA ligase from Gemmatimonas aurantiaca (strain DSM 14586 / JCM 11422 / NBRC 100505 / T-27).